The following is a 311-amino-acid chain: Porphobilinogen deaminase (311 aa).

At C242 the chain carries S-(dipyrrolylmethanemethyl)cysteine.

It belongs to the HMBS family. As to quaternary structure, monomer. The cofactor is dipyrromethane.

It catalyses the reaction 4 porphobilinogen + H2O = hydroxymethylbilane + 4 NH4(+). It functions in the pathway porphyrin-containing compound metabolism; protoporphyrin-IX biosynthesis; coproporphyrinogen-III from 5-aminolevulinate: step 2/4. In terms of biological role, tetrapolymerization of the monopyrrole PBG into the hydroxymethylbilane pre-uroporphyrinogen in several discrete steps. The sequence is that of Porphobilinogen deaminase (hemC) from Neisseria meningitidis serogroup B (strain ATCC BAA-335 / MC58).